The primary structure comprises 296 residues: Nucleotide-binding protein SEQ_0857 (296 aa).

13 to 20 (GMSGAGKT) contributes to the ATP binding site. Residue 63 to 66 (DMRS) coordinates GTP.

It belongs to the RapZ-like family.

Its function is as follows. Displays ATPase and GTPase activities. The sequence is that of Nucleotide-binding protein SEQ_0857 from Streptococcus equi subsp. equi (strain 4047).